A 604-amino-acid polypeptide reads, in one-letter code: FAD-linked oxidoreductase easE (604 aa).

An N-terminal signal peptide occupies residues 1 to 25 (MQFLLWSTGLVALLSWLIYTQETQS). N-linked (GlcNAc...) asparagine glycosylation is found at Asn-47, Asn-70, Asn-106, and Asn-196. The FAD-binding PCMH-type domain maps to 125-308 (QGRIPLFTVG…TRATMRVFPD (184 aa)).

It belongs to the oxygen-dependent FAD-linked oxidoreductase family. It depends on FAD as a cofactor.

It participates in alkaloid biosynthesis; ergot alkaloid biosynthesis. Functionally, FAD-linked oxidoreductase; part of the gene cluster that mediates the biosynthesis of fungal ergot alkaloid. DmaW catalyzes the first step of ergot alkaloid biosynthesis by condensing dimethylallyl diphosphate (DMAP) and tryptophan to form 4-dimethylallyl-L-tryptophan. The second step is catalyzed by the methyltransferase easF that methylates 4-dimethylallyl-L-tryptophan in the presence of S-adenosyl-L-methionine, resulting in the formation of 4-dimethylallyl-L-abrine. The catalase easC and the FAD-dependent oxidoreductase easE then transform 4-dimethylallyl-L-abrine to chanoclavine-I which is further oxidized by easD in the presence of NAD(+), resulting in the formation of chanoclavine-I aldehyde. Chanoclavine-I aldehyde is the precursor of ergoamides and ergopeptines in Clavicipitaceae, and clavine-type alcaloids such as fumiclavine in Trichocomaceae. However, the metabolites downstream of chanoclavine-I aldehyde in Arthrodermataceae have not been identified yet. The sequence is that of FAD-linked oxidoreductase easE from Trichophyton verrucosum (strain HKI 0517).